The chain runs to 982 residues: Glycine dehydrogenase (decarboxylating) (982 aa).

Lys-729 is subject to N6-(pyridoxal phosphate)lysine.

The protein belongs to the GcvP family. The glycine cleavage system is composed of four proteins: P, T, L and H. It depends on pyridoxal 5'-phosphate as a cofactor.

It catalyses the reaction N(6)-[(R)-lipoyl]-L-lysyl-[glycine-cleavage complex H protein] + glycine + H(+) = N(6)-[(R)-S(8)-aminomethyldihydrolipoyl]-L-lysyl-[glycine-cleavage complex H protein] + CO2. The glycine cleavage system catalyzes the degradation of glycine. The P protein binds the alpha-amino group of glycine through its pyridoxal phosphate cofactor; CO(2) is released and the remaining methylamine moiety is then transferred to the lipoamide cofactor of the H protein. This Ralstonia nicotianae (strain ATCC BAA-1114 / GMI1000) (Ralstonia solanacearum) protein is Glycine dehydrogenase (decarboxylating).